Here is a 198-residue protein sequence, read N- to C-terminus: UPF0215 protein NEQ431 (198 aa).

Positions 179-198 (TKGDSSKPRAGGDSNPGPAG) are disordered.

Belongs to the UPF0215 family.

The sequence is that of UPF0215 protein NEQ431 from Nanoarchaeum equitans (strain Kin4-M).